Reading from the N-terminus, the 450-residue chain is Probable ECA polymerase (450 aa).

11 consecutive transmembrane segments (helical) span residues 6 to 26 (FSGL…LTWF), 37 to 57 (VFFS…TSVL), 63 to 83 (VGVA…CFYA), 118 to 138 (VILM…NGFL), 155 to 175 (GVAL…VYFL), 181 to 201 (AWLF…MIVG), 207 to 227 (IIIA…ISLW), 228 to 248 (MLAA…LKRY), 341 to 361 (LVVM…GLII), 378 to 398 (YKAA…IVLA), and 410 to 430 (VFFI…YWLF).

Belongs to the WzyE family. As to quaternary structure, probably part of a complex composed of WzxE, WzyE and WzzE.

The protein localises to the cell inner membrane. The protein operates within bacterial outer membrane biogenesis; enterobacterial common antigen biosynthesis. Probably involved in the polymerization of enterobacterial common antigen (ECA) trisaccharide repeat units. This chain is Probable ECA polymerase, found in Shigella flexneri.